Here is a 311-residue protein sequence, read N- to C-terminus: Probable manganese-dependent inorganic pyrophosphatase (311 aa).

His-9, Asp-13, Asp-15, Asp-77, His-99, and Asp-151 together coordinate Mn(2+).

It belongs to the PPase class C family. Mn(2+) serves as cofactor.

The protein localises to the cytoplasm. The catalysed reaction is diphosphate + H2O = 2 phosphate + H(+). The sequence is that of Probable manganese-dependent inorganic pyrophosphatase from Streptococcus equi subsp. zooepidemicus (strain MGCS10565).